Here is a 300-residue protein sequence, read N- to C-terminus: Protein XRI1 (300 aa).

Interacts (via C-terminal domain) with MIP1.

The protein localises to the nucleus. Its function is as follows. Required for mitotic division of the generative cell nucleus and the development of mature tricellular pollen grains, and for male and female meiosis. The protein is Protein XRI1 (XRI1) of Arabidopsis thaliana (Mouse-ear cress).